The chain runs to 396 residues: Acetate kinase (396 aa).

N7 lines the Mg(2+) pocket. K14 contacts ATP. R88 serves as a coordination point for substrate. The active-site Proton donor/acceptor is D145. ATP is bound by residues 205 to 209 (HLGNG), 279 to 281 (DFR), and 327 to 331 (GIGEN). Position 381 (E381) interacts with Mg(2+).

Belongs to the acetokinase family. Homodimer. Mg(2+) serves as cofactor. Mn(2+) is required as a cofactor.

The protein localises to the cytoplasm. The enzyme catalyses acetate + ATP = acetyl phosphate + ADP. It functions in the pathway metabolic intermediate biosynthesis; acetyl-CoA biosynthesis; acetyl-CoA from acetate: step 1/2. Functionally, catalyzes the formation of acetyl phosphate from acetate and ATP. Can also catalyze the reverse reaction. The chain is Acetate kinase from Campylobacter jejuni subsp. jejuni serotype O:23/36 (strain 81-176).